Consider the following 2033-residue polypeptide: MFWHQPRQQQLRQLQRAASGAGKHQRRSPPQTLGDDGDAAAQVPPSPTGALLAFLNQHASEEGGAAAASADGRVSVSPGFCSSILPEHSQDLFAFSDPTSASPQPVPMDASLSLFTPPVPDCGRDVGEEAEGAVAPSWRAPLPAPQWRPVHGPSWWLSSSSPSGSSRGSVTSPQYSGEETSDAASGAPTPPPQSSGSSYVYGQALADLMAMIQEIPAPPRSVPDCRRGEPVSEDGMADRCETDASCYTTDEPMEAEPSEPAGGVSWLGERADRMRADQSPRGLGAEPHVAEAGRPSSCVGEERADVVAIAAVEERKEAARRSPDAERNDDEEEYESLPCAQEFFTSQELAEINARAIAESDEAEDEDAGSPAARSQSSPFPSLGPAVFVLAPTSAKSSRGMRKKAIAVSRVVPDNDGEPDPCADGPGRDHVSSAQSAGANGALETETSVPRSATAPAGAVAACAQNTKRGYWRGAAAGHAEEETDSDDEDVLVVDVSACAEPFESFAQRQQPRQQQHAPRNKPARQRLRAGAIVAAASGNTLTVPSEPPHPSLAPLWKMLNLWLSEEWPAQGGGQDEGEAAVSASLLAPGSLPELPDMCPRVAVGIISHALAVDLSAPGGRITVDEALLPKPPAADYVYYGKTGYRPSMAAHPDVRRAAEEFSASDAAARVYVEEFGMAVEQHERLVAEFMLQPLSRVSHSYGGSRLNKTEKNLCKICLPPDGGDDRDGGGKSRGGRGGGSKDASRTAMATGVPHIVHAMRDGRAALALPHLMDVIRVCRRYDASQKTYLLSCLRLAFAPLVFPGASPPVGADDSPWPTSPIRECAAALREGFRALNDIRAEQDPPADERSRELALPLDRAITAARRVAATAAGLLNAVGASVVHDGRVGLPAFFLRGVTERREDLFSAARRCPRALYSWERSMRATTAALWGHLASRGPIAAPVADLEELSQALSAVLSVTSVPDGGDVRYAFAEADEGWRALAVMLGGGAVRTSSGESGDAETDAAYALLAPGKQSSAGVNHPRGRPGRATASSPRTPASRPPHGSAAAPPSGRDSPPGALNVPEAAEEELRLAAARDTTGDLLSDEAGTDDDGDAPVVISYVGPSSPPGVEDPSPDGLAALRPLPEGYVPRPGDVLRGDPGADENDDDARAPCRVGDASPPRQLPSSSSFASSSLASAVPGDPYLPRSVAEPTLCRLAEHLQSDDGWTRAFANDPVGLAEFARRSTPGRRLGGQRRLDQLLSWTRRHSPRRRYSLIVLVSEKRPGDFRERAYAAAALAGRACVPGSACDPETWRDAEDHPSPSADAQSPLRSRPSRDCFPPRIAQPEASDDDDVGEGGTALLSAGDIGFAGAVESMLRRALSRQGQACAVVDARDDKDVLSAAAPRFPRGKPGLIYLRVAPPSEACVANLPSLGPSASPHRGVGGKHRDKRPCLAEGTPSAPSCRDAARATAPLSGDPVAHRLLMHRPAKPLVGEEACAALLGGKAGRRGQDVPLPFLTAATLRKVARVARELDPGWGHGDLGCESAVVFPPAAPPGPELADRHADRRRSTKGPQRPGGKRPRSSSSSSSASHDRSPSSSSRRRDGRPSSRRRPSRRMSARPPSRPPAAVILRASWRYAEEVAREMLDAAASRFDEADGEDPLPPAACGGKPIAPETLVALCEQRGRGPTSLPRAPTPRSGEALAAPRRSGAKDPRQGQYCPSARRSEAPHSPSPRDVALRLLERQQELNRQLLLELRRGSCEISPSPRRRDAEGRRFGCRQDDDDGYDYEGGRESPERVLGRRQSRRDSVPVRRRSGAANCGGRWMISAGRSSSSSSSSSSSSSSSPSSRPSRSATPSLSPSPSPPRRAPVDRSRSGRRRERDRPSANPFRWAPRQRSRADHSPDGTAPGDAPLNLEDGPGRGRPIWTPSSATTLPSRSGPEDSVDETETEDSAPPARLAPSPLETSRAEDSEDSEYPEYSNPRLGKSPPALKSREARRPSSKQPRRPSSGKNGHTDVSAASAFFLGRPAPGSCGRRPLGARVRGGTER.

Over residues 1-16 the composition is skewed to low complexity; it reads MFWHQPRQQQLRQLQR. Disordered regions lie at residues 1–47, 95–145, 157–199, 218–240, 277–301, 313–338, 350–461, 505–527, 719–747, 1015–1064, 1085–1186, 1294–1342, 1420–1451, 1531–1612, 1636–1655, 1664–1718, and 1746–2033; these read MFWH…PPSP, FSDP…LPAP, LSSS…GSSY, PPRS…ADRC, DQSP…CVGE, EERK…ESLP, AEIN…GAVA, SFAQ…ARQR, LPPD…ASRT, GKQS…GALN, LLSD…PGDP, ETWR…EGGT, ASPH…RDAA, VVFP…PPAA, RFDE…GGKP, LCEQ…SPSP, and EISP…GTER. Over residues 157–173 the composition is skewed to low complexity; sequence LSSSSPSGSSRGSVTSP. Over residues 223 to 240 the composition is skewed to basic and acidic residues; it reads PDCRRGEPVSEDGMADRC. The span at 313–326 shows a compositional bias: basic and acidic residues; the sequence is EERKEAARRSPDAE. The segment covering 359 to 368 has biased composition (acidic residues); it reads ESDEAEDEDA. A compositionally biased stretch (low complexity) spans 507–518; it reads AQRQQPRQQQHA. A compositionally biased stretch (gly residues) spans 732-741; sequence KSRGGRGGGS. The segment covering 1031–1056 has biased composition (low complexity); sequence RATASSPRTPASRPPHGSAAAPPSGR. Positions 1086–1097 are enriched in acidic residues; sequence LSDEAGTDDDGD. The segment covering 1169–1181 has biased composition (low complexity); it reads SSSSFASSSLASA. Positions 1294 to 1303 are enriched in basic and acidic residues; the sequence is ETWRDAEDHP. Residues 1575–1591 are compositionally biased toward basic and acidic residues; the sequence is SHDRSPSSSSRRRDGRP. Residues 1592-1602 are compositionally biased toward basic residues; it reads SSRRRPSRRMS. 2 stretches are compositionally biased toward basic and acidic residues: residues 1752–1765 and 1774–1795; these read RRRD…GCRQ and EGGR…DSVP. Residues 1812–1843 show a composition bias toward low complexity; sequence SAGRSSSSSSSSSSSSSSSPSSRPSRSATPSL. Residues 1853 to 1869 show a composition bias toward basic and acidic residues; it reads APVDRSRSGRRRERDRP. The span at 1912–1921 shows a compositional bias: polar residues; it reads TPSSATTLPS. Over residues 1927–1936 the composition is skewed to acidic residues; that stretch reads DSVDETETED. The span at 1937-1948 shows a compositional bias: low complexity; that stretch reads SAPPARLAPSPL.

Belongs to the herpesviridae ICP4 family. A long stretch of serine residues may be a major site of phosphorylation.

It localises to the host nucleus. This IE protein is a multifunctional protein capable of migrating to the nucleus, binding to DNA, trans-activating other viral genes, and autoregulating its own synthesis. It is required for the switch from immediate-early to early mode of gene expression. The chain is Major viral transcription factor ICP4 homolog (ICP4B) from Amazona oratrix (yellow-headed parrot).